Reading from the N-terminus, the 258-residue chain is MSSLLDKTRMLNRILQKSGTEPVDFEDICDLLSDVLACNVYIISRKGKILGSKFYSGFECDEVREVVLKENRFPDFYNNKLLNVNETLSNSPNHDKCVFDNLKDCSINNKLSTIVPINGNRERLGTLLLARFDKEFTDEDLVLAEYSATIIGLEILRSKQDQIEEEARKKAVVQLAIGTLSYSELEAVEHIFNELDGTEGLLVASKIADKVGITRSVIVNALRKFESAGVIESRSLGMKGTHIRILNDKLLEELKKIK.

Positions 1–156 (MSSLLDKTRM…SATIIGLEIL (156 aa)) are GAF domain. Positions 204–223 (ASKIADKVGITRSVIVNALR) form a DNA-binding region, H-T-H motif.

It belongs to the CodY family.

Its subcellular location is the cytoplasm. DNA-binding global transcriptional regulator which is involved in the adaptive response to starvation and acts by directly or indirectly controlling the expression of numerous genes in response to nutrient availability. During rapid exponential growth, CodY is highly active and represses genes whose products allow adaptation to nutrient depletion. This is Global transcriptional regulator CodY from Clostridium botulinum (strain ATCC 19397 / Type A).